The primary structure comprises 262 residues: Putative hydro-lyase Sca_2211 (262 aa).

The protein belongs to the D-glutamate cyclase family.

The sequence is that of Putative hydro-lyase Sca_2211 from Staphylococcus carnosus (strain TM300).